Consider the following 194-residue polypeptide: Large ribosomal subunit protein eL15 (194 aa).

Positions 165 to 194 are disordered; that stretch reads AGKKGRGLRNKGKGAEKVRPSIRANEGKGK. Residues 167 to 176 are compositionally biased toward basic residues; sequence KKGRGLRNKG. Residues 177 to 194 show a composition bias toward basic and acidic residues; it reads KGAEKVRPSIRANEGKGK.

Belongs to the eukaryotic ribosomal protein eL15 family. In terms of assembly, part of the 50S ribosomal subunit.

This is Large ribosomal subunit protein eL15 from Pyrococcus furiosus (strain ATCC 43587 / DSM 3638 / JCM 8422 / Vc1).